Reading from the N-terminus, the 430-residue chain is Enolase (430 aa).

Q167 is a (2R)-2-phosphoglycerate binding site. E209 acts as the Proton donor in catalysis. D246, E287, and D314 together coordinate Mg(2+). Positions 339, 368, 369, and 390 each coordinate (2R)-2-phosphoglycerate. K339 serves as the catalytic Proton acceptor.

This sequence belongs to the enolase family. Requires Mg(2+) as cofactor.

It localises to the cytoplasm. The protein localises to the secreted. The protein resides in the cell surface. It carries out the reaction (2R)-2-phosphoglycerate = phosphoenolpyruvate + H2O. It functions in the pathway carbohydrate degradation; glycolysis; pyruvate from D-glyceraldehyde 3-phosphate: step 4/5. Catalyzes the reversible conversion of 2-phosphoglycerate (2-PG) into phosphoenolpyruvate (PEP). It is essential for the degradation of carbohydrates via glycolysis. The sequence is that of Enolase from Prochlorococcus marinus (strain AS9601).